The chain runs to 195 residues: Thioredoxin reductase-like selenoprotein T (195 aa).

An N-terminal signal peptide occupies residues 1–19 (MRLLLLLLVAASAVVRSDA). The segment at residues 46–49 (CVSU) is a cross-link (cysteinyl-selenocysteine (Cys-Sec)). Sec-49 is a non-standard amino acid (selenocysteine). The helical transmembrane segment at 85 to 103 (IASFLSVFKLVLIGLIIVG) threads the bilayer.

This sequence belongs to the SelWTH family. Selenoprotein T subfamily. Post-translationally, may contain a selenide-sulfide bond between Cys-46 and Sec-49. This bond is speculated to serve as redox-active pair.

The protein localises to the endoplasmic reticulum membrane. The enzyme catalyses [thioredoxin]-dithiol + NADP(+) = [thioredoxin]-disulfide + NADPH + H(+). Its function is as follows. Selenoprotein with thioredoxin reductase-like oxidoreductase activity. Protects dopaminergic neurons against oxidative stress and cell death. Involved in ADCYAP1/PACAP-induced calcium mobilization and neuroendocrine secretion. Plays a role in fibroblast anchorage and redox regulation. In gastric smooth muscle, modulates the contraction processes through the regulation of calcium release and MYLK activation. In pancreatic islets, involved in the control of glucose homeostasis, contributes to prolonged ADCYAP1/PACAP-induced insulin secretion. The chain is Thioredoxin reductase-like selenoprotein T from Bos taurus (Bovine).